The chain runs to 196 residues: MQLLEQALARFAEVYGRAAEAADVVDHTACTLATCSASGWPQVRTVLLKGYDERGFAFYTNRHSRKGQALAENPRAAVCFHWAPLAEQVVIEGVVTPVAEAEADAYWAGRPRESQIGGWASHQSRGLESREVLEQRVAEYAARFPDGEAVPRPPHWSGYRLAPVRIEFWRARPGRLHERDVYEHTAEGWCHRLLNP.

Residues 44 to 49 (RTVLLK), 59 to 60 (YT), Arg-65, Lys-66, and Gln-88 contribute to the FMN site. Lys-49 is a substrate binding site. Substrate is bound by residues Tyr-106, Arg-110, and Ser-114. FMN-binding positions include 123-124 (QS) and Trp-169. 175–177 (RLH) provides a ligand contact to substrate. Residue Arg-179 coordinates FMN.

This sequence belongs to the pyridoxamine 5'-phosphate oxidase family. Homodimer. Requires FMN as cofactor.

It carries out the reaction pyridoxamine 5'-phosphate + O2 + H2O = pyridoxal 5'-phosphate + H2O2 + NH4(+). It catalyses the reaction pyridoxine 5'-phosphate + O2 = pyridoxal 5'-phosphate + H2O2. It participates in cofactor metabolism; pyridoxal 5'-phosphate salvage; pyridoxal 5'-phosphate from pyridoxamine 5'-phosphate: step 1/1. Its pathway is cofactor metabolism; pyridoxal 5'-phosphate salvage; pyridoxal 5'-phosphate from pyridoxine 5'-phosphate: step 1/1. Its function is as follows. Catalyzes the oxidation of either pyridoxine 5'-phosphate (PNP) or pyridoxamine 5'-phosphate (PMP) into pyridoxal 5'-phosphate (PLP). This chain is Pyridoxine/pyridoxamine 5'-phosphate oxidase, found in Alkalilimnicola ehrlichii (strain ATCC BAA-1101 / DSM 17681 / MLHE-1).